The sequence spans 239 residues: UPF0173 metal-dependent hydrolase DVU_3308 (239 aa).

Belongs to the UPF0173 family.

The protein is UPF0173 metal-dependent hydrolase DVU_3308 of Nitratidesulfovibrio vulgaris (strain ATCC 29579 / DSM 644 / CCUG 34227 / NCIMB 8303 / VKM B-1760 / Hildenborough) (Desulfovibrio vulgaris).